Here is a 610-residue protein sequence, read N- to C-terminus: Major facilitator superfamily multidrug transporter FLU1 (610 aa).

2 N-linked (GlcNAc...) asparagine glycosylation sites follow: Asn-3 and Asn-21. Residues 47–58 (GPTDSVESSSNT) show a composition bias toward polar residues. Positions 47 to 74 (GPTDSVESSSNTADEENEINSFNAQNVK) are disordered. 11 helical membrane-spanning segments follow: residues 165–185 (ILYC…SAMF), 209–229 (LFVF…ELFG), 231–251 (KLVM…VATA), 262–282 (FFAG…MADM), 292–312 (IAIF…LGAF), 323–343 (WTSY…TFLL), 408–428 (AFIY…FLGE), 437–457 (ELPY…IMLF), 478–498 (LEPM…LGWT), 507–527 (WIVP…IFLP), and 530–550 (NYII…NTFI). A glycan (N-linked (GlcNAc...) asparagine) is linked at Asn-568. The chain crosses the membrane as a helical span at residues 573 to 593 (WASTLLGCIGILLLPMPFVFY).

The protein belongs to the major facilitator superfamily. DHA1 family. Polyamines/proton antiporter (TC 2.A.1.2.16) subfamily.

It localises to the cell membrane. Its function is as follows. Major facilitator superfamily transporter that mediates resistance to structurally and functionally unrelated compounds including cycloheximide but also azoles such as fuconazole, ketoconazole and itraconazole. Also mediates efflux of histatin 5, a salivary human antimicrobial peptide, and is responsible for reduction of its toxicity in C.albicans. The chain is Major facilitator superfamily multidrug transporter FLU1 from Candida albicans (strain SC5314 / ATCC MYA-2876) (Yeast).